Reading from the N-terminus, the 527-residue chain is G patch domain-containing protein 2 (527 aa).

The disordered stretch occupies residues 35 to 135; that stretch reads LEESSEQARG…RPSSNLSSSV (101 aa). Positions 62–76 are enriched in basic residues; that stretch reads RQARKRRGRKRRSYN. The segment covering 97–116 has biased composition (basic and acidic residues); that stretch reads EPSKDYREKHSNNKKDRSDS. Phosphoserine is present on residues S114, S116, and S145. 3 disordered regions span residues 175–281, 350–375, and 480–527; these read SSKR…GDDE, TPSKNIKKSSGAPPSMLSAPGPGSNK, and TPGS…GNPA. Positions 186-196 are enriched in basic and acidic residues; the sequence is GCRDQDMDNDR. Basic residues predominate over residues 206–215; sequence KKVKKRKLKG. The segment covering 231 to 257 has biased composition (basic and acidic residues); the sequence is SEERSQPNKDRMEYEEQKASDELRSES. Residues 466–512 form the G-patch domain; it reads ESNIGNRMLQSMGWTPGSGLGRDGRGIAEPVQAVQRPKGLGLGFPLP. Over residues 510 to 527 the composition is skewed to low complexity; sequence PLPKSSPTSPAPTSGNPA.

In terms of assembly, interacts with DHX15.

The protein resides in the nucleus speckle. It is found in the nucleus. It localises to the nucleolus. Its function is as follows. Enhances the ATPase activity of DHX15 in vitro. The chain is G patch domain-containing protein 2 (Gpatch2) from Mus musculus (Mouse).